The sequence spans 573 residues: DNA ligase (573 aa).

Glutamate 250 serves as a coordination point for ATP. Lysine 252 serves as the catalytic N6-AMP-lysine intermediate. Residues arginine 257, arginine 272, glutamate 301, phenylalanine 342, arginine 432, and lysine 438 each coordinate ATP.

This sequence belongs to the ATP-dependent DNA ligase family. The cofactor is Mg(2+).

The enzyme catalyses ATP + (deoxyribonucleotide)n-3'-hydroxyl + 5'-phospho-(deoxyribonucleotide)m = (deoxyribonucleotide)n+m + AMP + diphosphate.. Functionally, DNA ligase that seals nicks in double-stranded DNA during DNA replication, DNA recombination and DNA repair. This chain is DNA ligase, found in Methanococcus vannielii (strain ATCC 35089 / DSM 1224 / JCM 13029 / OCM 148 / SB).